The following is a 1132-amino-acid chain: DNA topoisomerase 2 (1132 aa).

Residues Asn-68, Asn-100, 137–139, and 150–157 contribute to the ATP site; these read SSN and GKNGLGVK. The interval 327-329 is interaction with DNA; the sequence is NKP. Residue 363-365 coordinates ATP; that stretch reads QNK. A Toprim domain is found at 442–577; the sequence is CTLIVCEGLS…NLKDFPFISS (136 aa). The Mg(2+) site is built by Glu-448, Asp-538, and Asp-540. The Topo IIA-type catalytic domain occupies 713 to 1125; sequence LPHLIDGLKE…NEGQMWLKDI (413 aa). Tyr-803 functions as the O-(5'-phospho-DNA)-tyrosine intermediate in the catalytic mechanism. Positions 979-988 are interaction with DNA; the sequence is KLRSYIHTSN.

This sequence belongs to the type II topoisomerase family. The cofactor is Mg(2+). Requires Mn(2+) as cofactor. Ca(2+) serves as cofactor.

It carries out the reaction ATP-dependent breakage, passage and rejoining of double-stranded DNA.. Its function is as follows. Can introduce negative superhelical turns into double-stranded circular DNA. This chain is DNA topoisomerase 2 (TOP2), found in Acheta domesticus (House cricket).